We begin with the raw amino-acid sequence, 298 residues long: Protein pxr1 (298 aa).

The span at 1 to 11 (MGLAAPRKRTK) shows a compositional bias: basic residues. Residues 1-23 (MGLAAPRKRTKISHDPNNTNWAR) are disordered. The G-patch domain occupies 25–79 (TSGFGHKILSSQGWTPGSFLGARDAAHADMFTAASAGHIRVVVKDDTLGLGARAG). The segment at 145–274 (LPERESVQQS…RPLGRQIVRG (130 aa)) is disordered. Polar residues predominate over residues 151–164 (VQQSRAAVETSDSN). A compositionally biased stretch (basic residues) spans 199 to 222 (REKKEKKDKKEKKEKKDKKDKKRK). Over residues 247-256 (GLESDSTSVS) the composition is skewed to polar residues.

The protein belongs to the PINX1 family.

It localises to the nucleus. It is found in the nucleolus. Involved in rRNA-processing at A0, A1 and A2 sites and negatively regulates telomerase. The sequence is that of Protein pxr1 (pxr1) from Aspergillus terreus (strain NIH 2624 / FGSC A1156).